The sequence spans 292 residues: NAD kinase (292 aa).

Catalysis depends on aspartate 74, which acts as the Proton acceptor. NAD(+) contacts are provided by residues 74–75 (DG), 147–148 (NE), aspartate 177, and 188–193 (TGYSLS).

Belongs to the NAD kinase family. A divalent metal cation is required as a cofactor.

Its subcellular location is the cytoplasm. The enzyme catalyses NAD(+) + ATP = ADP + NADP(+) + H(+). Functionally, involved in the regulation of the intracellular balance of NAD and NADP, and is a key enzyme in the biosynthesis of NADP. Catalyzes specifically the phosphorylation on 2'-hydroxyl of the adenosine moiety of NAD to yield NADP. This Cytophaga hutchinsonii (strain ATCC 33406 / DSM 1761 / CIP 103989 / NBRC 15051 / NCIMB 9469 / D465) protein is NAD kinase.